We begin with the raw amino-acid sequence, 283 residues long: Pantothenate synthetase (283 aa).

30 to 37 (MGYFHEGH) serves as a coordination point for ATP. Histidine 37 serves as the catalytic Proton donor. Residue glutamine 61 coordinates (R)-pantoate. Glutamine 61 is a beta-alanine binding site. Residue 147–150 (GEKD) participates in ATP binding. Glutamine 153 contributes to the (R)-pantoate binding site. ATP-binding positions include valine 176 and 184 to 187 (MSSR).

The protein belongs to the pantothenate synthetase family. Homodimer.

Its subcellular location is the cytoplasm. It catalyses the reaction (R)-pantoate + beta-alanine + ATP = (R)-pantothenate + AMP + diphosphate + H(+). It functions in the pathway cofactor biosynthesis; (R)-pantothenate biosynthesis; (R)-pantothenate from (R)-pantoate and beta-alanine: step 1/1. In terms of biological role, catalyzes the condensation of pantoate with beta-alanine in an ATP-dependent reaction via a pantoyl-adenylate intermediate. This is Pantothenate synthetase from Syntrophobacter fumaroxidans (strain DSM 10017 / MPOB).